The primary structure comprises 100 residues: Small ribosomal subunit protein uS14c (100 aa).

Belongs to the universal ribosomal protein uS14 family. In terms of assembly, part of the 30S ribosomal subunit.

The protein localises to the plastid. It is found in the chloroplast. Functionally, binds 16S rRNA, required for the assembly of 30S particles. This is Small ribosomal subunit protein uS14c from Staurastrum punctulatum (Green alga).